Here is a 253-residue protein sequence, read N- to C-terminus: 3-isopropylmalate dehydratase small subunit 3 (253 aa).

The transit peptide at methionine 1–arginine 56 directs the protein to the chloroplast.

The protein belongs to the LeuD family. In terms of assembly, heterodimer of the large LEUC/IIL1 subunit and the small LEUD (SSU1, SSU2 or SSU3) subunits. As to expression, expressed in vascular bundles of roots, cotyledons and rosette leaves. Expressed in stem vascular bundles which branche off into lateral inflorescences. Expressed in connective tissues in anthers. In hypocotyls, expressed in parenchyma cells surrounding the vasculature. In rosette leaves, expressed in phloem cells and cells close to the xylem along the vascular bundles. In roots of adult plants, expressed in cells closely associated with the stele. In flowering stalks, expressed in parenchyma cells associated with the phloem or the xylem.

Its subcellular location is the plastid. The protein resides in the chloroplast stroma. The catalysed reaction is (2R,3S)-3-isopropylmalate = (2S)-2-isopropylmalate. It catalyses the reaction a 2-(omega-methylsulfanyl)alkylmalate = a 2-(omega-methylsulfanyl)alkylmaleate + H2O. It carries out the reaction 2-(3-methylsulfanyl)propylmalate = 2-(2-methylsulfanyl)propylmaleate + H2O. The enzyme catalyses a 3-(omega-methylsulfanyl)alkylmalate = a 2-(omega-methylsulfanyl)alkylmaleate + H2O. The catalysed reaction is 2-(2-methylsulfanyl)ethylmalate = 2-(2-methylsulfanyl)ethylmaleate + H2O. It catalyses the reaction 3-(2-methylsulfanyl)ethylmalate = 2-(2-methylsulfanyl)ethylmaleate + H2O. It carries out the reaction 3-(3-methylsulfanyl)propylmalate = 2-(2-methylsulfanyl)propylmaleate + H2O. The protein operates within amino-acid biosynthesis; L-leucine biosynthesis; L-leucine from 3-methyl-2-oxobutanoate: step 2/4. Functionally, catalyzes the isomerization between 2-isopropylmalate and 3-isopropylmalate, via the formation of 2-isopropylmaleate. Functions redundantly with LEUD1 in the methionine chain elongation pathway of aliphatic glucosinolate formation. This Arabidopsis thaliana (Mouse-ear cress) protein is 3-isopropylmalate dehydratase small subunit 3.